The chain runs to 396 residues: Phosphoglycerate kinase (396 aa).

Substrate-binding positions include 21 to 23 (DFN), Arg36, 59 to 62 (HLGR), Arg118, and Arg151. Residues Lys201, Gly292, Glu323, and 349-352 (GGDS) each bind ATP.

This sequence belongs to the phosphoglycerate kinase family. As to quaternary structure, monomer.

It localises to the cytoplasm. The catalysed reaction is (2R)-3-phosphoglycerate + ATP = (2R)-3-phospho-glyceroyl phosphate + ADP. It functions in the pathway carbohydrate degradation; glycolysis; pyruvate from D-glyceraldehyde 3-phosphate: step 2/5. The protein is Phosphoglycerate kinase of Leptospira borgpetersenii serovar Hardjo-bovis (strain L550).